The primary structure comprises 133 residues: MSKLNKSIVAEFESAQITRELPKFSQGDTVVVNVKVKEGARERVQAYEGVVIATKNGGLNSSFTVRKISHGYGVERVFQTHSAIIDSVEVKRRGKVRAGKLYYLRGLEGKAARIKEDLAAAAAAKAARLAEKA.

The protein belongs to the bacterial ribosomal protein bL19 family.

This protein is located at the 30S-50S ribosomal subunit interface and may play a role in the structure and function of the aminoacyl-tRNA binding site. This chain is Large ribosomal subunit protein bL19, found in Stenotrophomonas maltophilia (strain R551-3).